We begin with the raw amino-acid sequence, 291 residues long: 33 kDa chaperonin (291 aa).

Cystine bridges form between Cys-229-Cys-231 and Cys-262-Cys-265.

It belongs to the HSP33 family. Post-translationally, under oxidizing conditions two disulfide bonds are formed involving the reactive cysteines. Under reducing conditions zinc is bound to the reactive cysteines and the protein is inactive.

Its subcellular location is the cytoplasm. Its function is as follows. Redox regulated molecular chaperone. Protects both thermally unfolding and oxidatively damaged proteins from irreversible aggregation. Plays an important role in the bacterial defense system toward oxidative stress. The chain is 33 kDa chaperonin from Aliivibrio fischeri (strain ATCC 700601 / ES114) (Vibrio fischeri).